We begin with the raw amino-acid sequence, 469 residues long: GDP-fucose protein O-fucosyltransferase 2 (469 aa).

The N-terminal stretch at 1 to 18 (MKFIIVLLLFFFFKVIDR) is a signal peptide. Residues 56-60 (GEGFN), 277-279 (HLR), and 373-374 (RF) contribute to the GDP-beta-L-fucose site. Catalysis depends on E57, which acts as the Proton acceptor.

This sequence belongs to the glycosyltransferase 68 family.

The protein localises to the endoplasmic reticulum. The catalysed reaction is L-seryl-[protein] + GDP-beta-L-fucose = 3-O-(alpha-L-fucosyl)-L-seryl-[protein] + GDP + H(+). It catalyses the reaction L-threonyl-[protein] + GDP-beta-L-fucose = 3-O-(alpha-L-fucosyl)-L-threonyl-[protein] + GDP + H(+). The protein operates within protein modification; protein glycosylation. Functionally, catalyzes the reaction that attaches fucose through an O-glycosidic linkage to a conserved serine or threonine residue in the consensus sequence C1-X-X-S/T-C2 of thrombospondin type I repeats (TSRs) where C1 and C2 are the first and second cysteines of the repeat, respectively. O-fucosylates sporozoite proteins CSP and TRAP. O-fucosylation regulates stability and intracellular trafficking of TRAP but not of CSP. Probably by regulating protein O-fucosylation, may play a role in parasite transmission to the mosquito vector and/or infection of the vertebrate host hepatocytes; however, POFUT2 involvement in transmission/infection is controversial. The chain is GDP-fucose protein O-fucosyltransferase 2 from Plasmodium falciparum (isolate NF54).